The chain runs to 70 residues: Large ribosomal subunit protein bL28 (70 aa).

It belongs to the bacterial ribosomal protein bL28 family.

This is Large ribosomal subunit protein bL28 from Maridesulfovibrio salexigens (strain ATCC 14822 / DSM 2638 / NCIMB 8403 / VKM B-1763) (Desulfovibrio salexigens).